The chain runs to 211 residues: Large ribosomal subunit protein bL9 (211 aa).

The interval 180–211 (DDIGAAGMDDDDDDAPAPAQADPSSEESSEED) is disordered.

The protein belongs to the bacterial ribosomal protein bL9 family.

Functionally, binds to the 23S rRNA. This Jannaschia sp. (strain CCS1) protein is Large ribosomal subunit protein bL9.